Here is a 289-residue protein sequence, read N- to C-terminus: Nodulation protein NolT (289 aa).

The signal sequence occupies residues 1–33; the sequence is MFGSAHGDTTSSDTSGRRPLRLVVLPLLLALSS. C34 carries N-palmitoyl cysteine lipidation. C34 is lipidated: S-diacylglycerol cysteine. The chain crosses the membrane as a helical span at residues 233–253; that stretch reads VAVGVGAAVFAVTCYLLFIVL.

The protein belongs to the YscJ lipoprotein family.

Its subcellular location is the cell outer membrane. Its function is as follows. Regulates cultivar-specific nodulation of soybean. In Rhizobium fredii (Sinorhizobium fredii), this protein is Nodulation protein NolT (nolT).